A 255-amino-acid polypeptide reads, in one-letter code: Microfibril-associated glycoprotein 4 (255 aa).

The first 20 residues, 1 to 20 (MEALLVLPLLLLLSAGPCAP), serve as a signal peptide directing secretion. The short motif at 26–28 (RGD) is the Cell attachment site element. One can recognise a Fibrinogen C-terminal domain in the interval 32–255 (KSCLQLPLDC…KRTEMKIRRA (224 aa)). N-linked (GlcNAc...) asparagine glycosylation is found at N87 and N137.

Homodimer. Can also form higher oligomers. Interacts with FBN1, FBN2 and LOX. Interacts with COL1A1 in a Ca (2+)-dependent manner. Interacts with ELN in a Ca (2+)-dependent manner; this interaction promotes ELN self-assembly.

The protein resides in the secreted. It localises to the extracellular space. It is found in the extracellular matrix. Its function is as follows. Could be involved in calcium-dependent cell adhesion or intercellular interactions. May contribute to the elastic fiber assembly and/or maintenance. The protein is Microfibril-associated glycoprotein 4 (MFAP4) of Bos taurus (Bovine).